The sequence spans 318 residues: DNA repair nuclease/redox regulator APEX1 (318 aa).

A necessary for interaction with YBX1, binding to RNA, association together with NPM1 to rRNA, endoribonuclease activity on abasic RNA and localization in the nucleoli region spans residues 1-33 (MPKRGKKGAVAEDGDELKTEPEAKKSKTTAKKN). The tract at residues 1-60 (MPKRGKKGAVAEDGDELKTEPEAKKSKTTAKKNDKEAAGEGPALYEDPPDQKTSPSGKPA) is disordered. 2 positions are modified to N6-acetyllysine; by EP300: K6 and K7. The short motif at 8-13 (GAVAED) is the Nuclear localization signal (NLS) element. Basic and acidic residues predominate over residues 16 to 38 (ELKTEPEAKKSKTTAKKNDKEAA). Residues 23-33 (AKKSKTTAKKN) are necessary for interaction with NPM1 and for efficient rRNA binding. K27, K31, K32, and K35 each carry N6-acetyllysine. S54 is modified (phosphoserine). The Nuclear export signal (NES) signature appears at 64–80 (ICSWNVDGLRAWIKKKG). C65 bears the S-nitrosocysteine; alternate mark. C65 and C93 are joined by a disulfide. Residue D70 participates in Mg(2+) binding. An S-nitrosocysteine; alternate modification is found at C93. Mg(2+) is bound at residue E96. Y171 is a catalytic residue. K197 is subject to N6-acetyllysine. Mg(2+) contacts are provided by D210 and N212. Catalysis depends on D210, which acts as the Proton donor/acceptor. The residue at position 233 (T233) is a Phosphothreonine; by CDK5. The mitochondrial targeting sequence (MTS) stretch occupies residues 289–318 (HSLLTALCDSKIRSKALGSDHCPITLYLAL). Residue D308 coordinates Mg(2+). C310 is subject to S-nitrosocysteine.

Belongs to the DNA repair enzymes AP/ExoA family. As to quaternary structure, monomer. Homodimer; disulfide-linked. Component of the SET complex, composed of at least APEX1, SET, ANP32A, HMGB2, NME1 and TREX1. Associates with the dimer XRCC5/XRCC6 in a DNA-dependent manner. Interacts with SIRT1; the interaction is increased in the context of genotoxic stress. Interacts with HDAC1, HDAC2 and HDAC3; the interactions are not dependent on the APEX1 acetylation status. Interacts with XRCC1; the interaction is induced by SIRT1 and increased with the APEX1 acetylated form. Interacts with NPM1 (via N-terminal domain); the interaction is RNA-dependent and decreases in hydrogen peroxide-damaged cells. Interacts (via N-terminus) with YBX1 (via C-terminus); the interaction is increased in presence of APEX1 acetylated at Lys-6 and Lys-7. Interacts with HNRNPL; the interaction is DNA-dependent. Interacts (via N-terminus) with KPNA1 and KPNA2. Interacts with TXN; the interaction stimulates the FOS/JUN AP-1 complex DNA-binding activity in a redox-dependent manner. Interacts with GZMA, KRT8, MDM2, POLB, PRDX6, PRPF19, RPLP0, TOMM20 and WDR77. Binds to CDK5. Mg(2+) serves as cofactor. Mn(2+) is required as a cofactor. Post-translationally, phosphorylated. Phosphorylation by kinase PKC or casein kinase CK2 results in enhanced redox activity that stimulates binding of the FOS/JUN AP-1 complex to its cognate binding site. AP-endodeoxyribonuclease activity is not affected by CK2-mediated phosphorylation. Phosphorylation of Thr-233 by CDK5 in response to MPP(+)/MPTP (1-methyl-4-phenylpyridinium) reduces AP-endodeoxyribonuclease activity resulting in accumulation of DNA damage and contributing to neuronal death. Acetylated on Lys-6 and Lys-7. Acetylation is increased by the transcriptional coactivator EP300 acetyltransferase, genotoxic agents like H(2)O(2) and methyl methanesulfonate (MMS). Acetylation increases its binding affinity to the negative calcium response element (nCaRE) DNA promoter. The acetylated form induces a stronger binding of YBX1 to the Y-box sequence in the MDR1 promoter than the unacetylated form. Deacetylated on lysines. Lys-6 and Lys-7 are deacetylated by SIRT1. In terms of processing, cleaved at Lys-31 by granzyme A to create the mitochondrial form; leading in reduction of binding to DNA, AP endodeoxyribonuclease activity, redox activation of transcription factors and to enhanced cell death. Cleaved by granzyme K; leading to intracellular ROS accumulation and enhanced cell death after oxidative stress. Post-translationally, cys-69 and Cys-93 are nitrosylated in response to nitric oxide (NO) and lead to the exposure of the nuclear export signal (NES). Ubiquitinated by MDM2; leading to translocation to the cytoplasm and proteasomal degradation.

It is found in the nucleus. Its subcellular location is the nucleolus. It localises to the nucleus speckle. The protein resides in the endoplasmic reticulum. The protein localises to the cytoplasm. It is found in the mitochondrion. The catalysed reaction is a deoxyribonucleotide-2'-deoxyribose-5'-monophosphate-DNA + H2O = a 5'-end 2'-deoxyribose-5'-monophosphate-DNA + a 3'-end 2'-deoxyribonucleotide-DNA + H(+). The enzyme catalyses Exonucleolytic cleavage in the 3'- to 5'-direction to yield nucleoside 5'-phosphates.. It carries out the reaction a 3'-end 2'-deoxyribonucleotide-3'-phosphoglycolate-DNA + H2O = 2-phosphoglycolate + a 3'-end 2'-deoxyribonucleotide-DNA + H(+). It catalyses the reaction a 3'-end 2'-deoxyribonucleotide-8-oxoguanine-DNA + H2O = 8-oxo-dGMP + a 3'-end 2'-deoxyribonucleotide-DNA + H(+). NPM1 stimulates endodeoxyribonuclease activity on double-stranded DNA with AP sites, but inhibits endoribonuclease activity on single-stranded RNA containing AP sites. In terms of biological role, multifunctional protein that plays a central role in the cellular response to oxidative stress. The two major activities of APEX1 are DNA repair and redox regulation of transcriptional factors. Functions as an apurinic/apyrimidinic (AP) endodeoxyribonuclease in the base excision repair (BER) pathway of DNA lesions induced by oxidative and alkylating agents. Initiates repair of AP sites in DNA by catalyzing hydrolytic incision of the phosphodiester backbone immediately adjacent to the damage, generating a single-strand break with 5'-deoxyribose phosphate and 3'-hydroxyl ends. Also incises at AP sites in the DNA strand of DNA/RNA hybrids, single-stranded DNA regions of R-loop structures, and single-stranded RNA molecules. Operates at switch sites of immunoglobulin (Ig) constant regions where it mediates Ig isotype class switch recombination. Processes AP sites induced by successive action of AICDA and UNG. Generates staggered nicks in opposite DNA strands resulting in the formation of double-strand DNA breaks that are finally resolved via non-homologous end joining repair pathway. Has 3'-5' exodeoxyribonuclease activity on mismatched deoxyribonucleotides at the 3' termini of nicked or gapped DNA molecules during short-patch BER. Possesses DNA 3' phosphodiesterase activity capable of removing lesions (such as phosphoglycolate and 8-oxoguanine) blocking the 3' side of DNA strand breaks. Also acts as an endoribonuclease involved in the control of single-stranded RNA metabolism. Plays a role in regulating MYC mRNA turnover by preferentially cleaving in between UA and CA dinucleotides of the MYC coding region determinant (CRD). In association with NMD1, plays a role in the rRNA quality control process during cell cycle progression. Acts as a loading factor for POLB onto non-incised AP sites in DNA and stimulates the 5'-terminal deoxyribose 5'-phosphate (dRp) excision activity of POLB. Exerts reversible nuclear redox activity to regulate DNA binding affinity and transcriptional activity of transcriptional factors by controlling the redox status of their DNA-binding domain, such as the FOS/JUN AP-1 complex after exposure to IR. Involved in calcium-dependent down-regulation of parathyroid hormone (PTH) expression by binding to negative calcium response elements (nCaREs). Together with HNRNPL or the dimer XRCC5/XRCC6, associates with nCaRE, acting as an activator of transcriptional repression. May also play a role in the epigenetic regulation of gene expression by participating in DNA demethylation. Stimulates the YBX1-mediated MDR1 promoter activity, when acetylated at Lys-6 and Lys-7, leading to drug resistance. Plays a role in protection from granzyme-mediated cellular repair leading to cell death. Binds DNA and RNA. Associates, together with YBX1, on the MDR1 promoter. Together with NPM1, associates with rRNA. The protein is DNA repair nuclease/redox regulator APEX1 (APEX1) of Pongo pygmaeus (Bornean orangutan).